Reading from the N-terminus, the 1153-residue chain is Nitric oxide synthase (1153 aa).

Ser3 is a binding site for (6R)-L-erythro-5,6,7,8-tetrahydrobiopterin. Cys82 contributes to the heme b binding site. Residues Gln145, Trp254, and Asn264 each contribute to the L-arginine site. Phe358 contributes to the (6R)-L-erythro-5,6,7,8-tetrahydrobiopterin binding site. Residues 397 to 417 form a calmodulin-binding region; it reads PKRKLGFKALARAVEFSASLM. The 184-residue stretch at 427–610 folds into the Flavodoxin-like domain; it reads CSIFYATETG…SFRAWSEEVF (184 aa). Position 556–587 (556–587) interacts with FMN; that stretch reads VFGLGSKAYPYYAAYGKYIYLMLQELGAERLV. The 244-residue stretch at 660-903 folds into the FAD-binding FR-type domain; the sequence is KEVMPLILAE…LRSAPHFHLP (244 aa). FAD is bound by residues 697-708 and 836-846; these read YAPGDHVAIFPA and LQPRYYSISSS. 911-929 contributes to the NADP(+) binding site; sequence IMIGPGSGIAPFRSFWQQR. Tandem repeats lie at residues 934–940, 941–947, 948–954, 955–961, 962–968, 969–975, 976–982, 983–989, 990–996, 997–1003, and 1004–1010. Positions 934–1010 are 11 X 7 AA tandem repeats of E-[NTR]-[ST]-[IM]-[PLQ]-[SP]-[CW]; it reads ENTMPSCENT…PSWERTMQPC (77 aa). An NADP(+)-binding site is contributed by 1089-1104; that stretch reads GGHFYVSGDVSMAHDV.

It belongs to the NOS family. Heme b serves as cofactor. FAD is required as a cofactor. Requires FMN as cofactor. Expressed in the central nervous system, in the serotonergic cerebral giant cells. The isoform Long and isoform Short are expressed equally in the CNS.

It carries out the reaction 2 L-arginine + 3 NADPH + 4 O2 + H(+) = 2 L-citrulline + 2 nitric oxide + 3 NADP(+) + 4 H2O. Its activity is regulated as follows. Stimulated by calcium/calmodulin. Produces nitric oxide (NO) which is a messenger molecule with diverse functions throughout the body. This chain is Nitric oxide synthase (NOS), found in Lymnaea stagnalis (Great pond snail).